The following is a 285-amino-acid chain: 4-diphosphocytidyl-2-C-methyl-D-erythritol kinase (285 aa).

K11 is an active-site residue. 95–105 (PVAAGIGGGSA) contacts ATP. D137 is an active-site residue.

The protein belongs to the GHMP kinase family. IspE subfamily.

It carries out the reaction 4-CDP-2-C-methyl-D-erythritol + ATP = 4-CDP-2-C-methyl-D-erythritol 2-phosphate + ADP + H(+). Its pathway is isoprenoid biosynthesis; isopentenyl diphosphate biosynthesis via DXP pathway; isopentenyl diphosphate from 1-deoxy-D-xylulose 5-phosphate: step 3/6. Catalyzes the phosphorylation of the position 2 hydroxy group of 4-diphosphocytidyl-2C-methyl-D-erythritol. The sequence is that of 4-diphosphocytidyl-2-C-methyl-D-erythritol kinase from Paramagnetospirillum magneticum (strain ATCC 700264 / AMB-1) (Magnetospirillum magneticum).